The following is a 187-amino-acid chain: Large ribosomal subunit protein uL6 (187 aa).

Belongs to the universal ribosomal protein uL6 family. As to quaternary structure, part of the 50S ribosomal subunit.

Its function is as follows. This protein binds to the 23S rRNA, and is important in its secondary structure. It is located near the subunit interface in the base of the L7/L12 stalk, and near the tRNA binding site of the peptidyltransferase center. The protein is Large ribosomal subunit protein uL6 of Chloroflexus aggregans (strain MD-66 / DSM 9485).